Reading from the N-terminus, the 215-residue chain is UPF0502 protein Shew_1617 (215 aa).

Belongs to the UPF0502 family.

The chain is UPF0502 protein Shew_1617 from Shewanella loihica (strain ATCC BAA-1088 / PV-4).